The following is a 369-amino-acid chain: Mitogen-activated protein kinase 5 (369 aa).

In terms of domain architecture, Protein kinase spans 36 to 322 (QPPIMPIGRG…VEEALDHPYL (287 aa)). Residues 42 to 50 (IGRGAYGIV) and Lys65 each bind ATP. Catalysis depends on Asp162, which acts as the Proton acceptor. The residue at position 194 (Thr194) is a Phosphothreonine. Positions 194-196 (TEY) match the TXY motif. Residue Tyr196 is modified to Phosphotyrosine.

It belongs to the protein kinase superfamily. CMGC Ser/Thr protein kinase family. MAP kinase subfamily. As to quaternary structure, interacts with MKK1. Post-translationally, dually phosphorylated on Thr-194 and Tyr-196, which activates the enzyme.

The enzyme catalyses L-seryl-[protein] + ATP = O-phospho-L-seryl-[protein] + ADP + H(+). It carries out the reaction L-threonyl-[protein] + ATP = O-phospho-L-threonyl-[protein] + ADP + H(+). Activated by threonine and tyrosine phosphorylation. In terms of biological role, involved in disease resistance and abiotic stress tolerance signaling pathways. This chain is Mitogen-activated protein kinase 5 (MPK5), found in Oryza sativa subsp. indica (Rice).